A 205-amino-acid polypeptide reads, in one-letter code: Molybdenum cofactor guanylyltransferase (205 aa).

GTP contacts are provided by residues 14-16 (LAG), Lys27, Asp77, and Asp107. Asp107 serves as a coordination point for Mg(2+).

This sequence belongs to the MobA family. As to quaternary structure, monomer. Mg(2+) is required as a cofactor.

Its subcellular location is the cytoplasm. It carries out the reaction Mo-molybdopterin + GTP + H(+) = Mo-molybdopterin guanine dinucleotide + diphosphate. Transfers a GMP moiety from GTP to Mo-molybdopterin (Mo-MPT) cofactor (Moco or molybdenum cofactor) to form Mo-molybdopterin guanine dinucleotide (Mo-MGD) cofactor. The protein is Molybdenum cofactor guanylyltransferase of Burkholderia orbicola (strain MC0-3).